Reading from the N-terminus, the 345-residue chain is Biotin synthase (345 aa).

The region spanning 66–293 (NTVQLSTLLS…RAMVRLSAGR (228 aa)) is the Radical SAM core domain. Residues Cys-81, Cys-85, and Cys-88 each contribute to the [4Fe-4S] cluster site. [2Fe-2S] cluster-binding residues include Cys-125, Cys-156, Cys-216, and Arg-288.

This sequence belongs to the radical SAM superfamily. Biotin synthase family. Homodimer. [4Fe-4S] cluster is required as a cofactor. [2Fe-2S] cluster serves as cofactor.

The enzyme catalyses (4R,5S)-dethiobiotin + (sulfur carrier)-SH + 2 reduced [2Fe-2S]-[ferredoxin] + 2 S-adenosyl-L-methionine = (sulfur carrier)-H + biotin + 2 5'-deoxyadenosine + 2 L-methionine + 2 oxidized [2Fe-2S]-[ferredoxin]. It participates in cofactor biosynthesis; biotin biosynthesis; biotin from 7,8-diaminononanoate: step 2/2. Its function is as follows. Catalyzes the conversion of dethiobiotin (DTB) to biotin by the insertion of a sulfur atom into dethiobiotin via a radical-based mechanism. The sequence is that of Biotin synthase from Cupriavidus metallidurans (strain ATCC 43123 / DSM 2839 / NBRC 102507 / CH34) (Ralstonia metallidurans).